The following is a 92-amino-acid chain: Progonadoliberin-1 (92 aa).

A signal peptide spans 1-23; that stretch reads MEKSRKILVGVLLFTASVAICLA. A Pyrrolidone carboxylic acid modification is found at Gln-24. At Gly-33 the chain carries Glycine amide.

The protein belongs to the GnRH family.

Its subcellular location is the secreted. Its function is as follows. Stimulates the secretion of gonadotropins. The polypeptide is Progonadoliberin-1 (GNRH1) (Gallus gallus (Chicken)).